The sequence spans 605 residues: Elongation factor 4 (605 aa).

The 183-residue stretch at 11 to 193 folds into the tr-type G domain; that stretch reads KNIRNFSIIA…TLVDVIPAPT (183 aa). Residues 23–28 and 140–143 contribute to the GTP site; these read DHGKST and NKID.

Belongs to the TRAFAC class translation factor GTPase superfamily. Classic translation factor GTPase family. LepA subfamily.

It is found in the cell inner membrane. It carries out the reaction GTP + H2O = GDP + phosphate + H(+). In terms of biological role, required for accurate and efficient protein synthesis under certain stress conditions. May act as a fidelity factor of the translation reaction, by catalyzing a one-codon backward translocation of tRNAs on improperly translocated ribosomes. Back-translocation proceeds from a post-translocation (POST) complex to a pre-translocation (PRE) complex, thus giving elongation factor G a second chance to translocate the tRNAs correctly. Binds to ribosomes in a GTP-dependent manner. This Acinetobacter baumannii (strain SDF) protein is Elongation factor 4.